The following is a 353-amino-acid chain: Alcohol dehydrogenase 1 (353 aa).

Residues Cys47, His70, Cys101, Cys104, Cys107, Cys115, and Cys157 each coordinate Zn(2+). Residues 181–187, Asp205, Lys210, 274–276, and Arg346 each bind NAD(+); these read GAGGGLG and IGL.

The protein belongs to the zinc-containing alcohol dehydrogenase family. In terms of assembly, homotetramer. Zn(2+) serves as cofactor.

It is found in the cytoplasm. The catalysed reaction is a primary alcohol + NAD(+) = an aldehyde + NADH + H(+). It catalyses the reaction a secondary alcohol + NAD(+) = a ketone + NADH + H(+). The protein is Alcohol dehydrogenase 1 (adh-1) of Neurospora crassa (strain ATCC 24698 / 74-OR23-1A / CBS 708.71 / DSM 1257 / FGSC 987).